The following is a 181-amino-acid chain: MARGVNKVILVGTCGQDPEVRYLPNGNAVTNLSLATSEQWTDKQSGQKVERTEWHRVSLFGKVAEIAGEYLRKGSQCYIEGKLQTREWEKDGIKRYTTEIIVDINGTMQLLGGRPQGQQQGGDPYNQGGGNYGGGQQQQYNQAPPRQQAQRPQQAPQRPAPQQPAPQPAADFDSFDDDIPF.

One can recognise an SSB domain in the interval 5 to 109 (VNKVILVGTC…IIVDINGTMQ (105 aa)). Positions 111 to 181 (LGGRPQGQQQ…FDSFDDDIPF (71 aa)) are disordered. Positions 112 to 126 (GGRPQGQQQGGDPYN) are enriched in low complexity. A compositionally biased stretch (gly residues) spans 127–136 (QGGGNYGGGQ). Residues 137-157 (QQQYNQAPPRQQAQRPQQAPQ) are compositionally biased toward low complexity. Residues 158 to 167 (RPAPQQPAPQ) are compositionally biased toward pro residues. Residues 176 to 181 (DDDIPF) carry the Important for interaction with partner proteins motif.

Homotetramer.

Plays an important role in DNA replication, recombination and repair. Binds to ssDNA and to an array of partner proteins to recruit them to their sites of action during DNA metabolism. In Pseudomonas putida (strain ATCC 47054 / DSM 6125 / CFBP 8728 / NCIMB 11950 / KT2440), this protein is Single-stranded DNA-binding protein (ssb).